A 144-amino-acid polypeptide reads, in one-letter code: Large ribosomal subunit protein uL13 (144 aa).

Belongs to the universal ribosomal protein uL13 family. As to quaternary structure, part of the 50S ribosomal subunit.

Its function is as follows. This protein is one of the early assembly proteins of the 50S ribosomal subunit, although it is not seen to bind rRNA by itself. It is important during the early stages of 50S assembly. This chain is Large ribosomal subunit protein uL13, found in Lawsonia intracellularis (strain PHE/MN1-00).